Consider the following 71-residue polypeptide: Ribosome modulation factor (71 aa).

The protein belongs to the ribosome modulation factor family.

Its subcellular location is the cytoplasm. During stationary phase, converts 70S ribosomes to an inactive dimeric form (100S ribosomes). This chain is Ribosome modulation factor, found in Pseudomonas savastanoi pv. phaseolicola (strain 1448A / Race 6) (Pseudomonas syringae pv. phaseolicola (strain 1448A / Race 6)).